Reading from the N-terminus, the 294-residue chain is MRTGCEPTRFGNEAKTIIHGDALAELKKIPAESVDLIFADPPYNIGKNFDGLIEAWKEDLFIDWLFEVIAECHRVLKKQGSMYIMNSTENMPFIDLQCRKLFTIKSRIVWSYDSSGVQAKKHYGSMYEPILMMVKDAKNYTFNGDAILVEAKTGSQRALIDYRKNPPQPYNHQKVPGNVWDFPRVRYLMDEYENHPTQKPEALLKRIILASSNPGDIVLDPFAGSFTTGAVAIASGRKFIGIEINSEYIKMGLRRLDVASHYSAEELAKVKKRKTGNLSKRSRLSEVDPDLITK.

Residues 275–294 form a disordered region; it reads TGNLSKRSRLSEVDPDLITK. A compositionally biased stretch (basic and acidic residues) spans 283–294; the sequence is RLSEVDPDLITK.

The protein belongs to the N(4)/N(6)-methyltransferase family.

The catalysed reaction is a 2'-deoxyadenosine in DNA + S-adenosyl-L-methionine = an N(6)-methyl-2'-deoxyadenosine in DNA + S-adenosyl-L-homocysteine + H(+). Functionally, a beta subtype methylase, recognizes the double-stranded sequence 5'-ATGCAT-3' and methylates A-5. The protein is DNA adenine methyltransferase YhdJ (yhdJ) of Escherichia coli (strain K12).